We begin with the raw amino-acid sequence, 159 residues long: Ribosomal RNA large subunit methyltransferase H (159 aa).

S-adenosyl-L-methionine-binding positions include Leu-76, Gly-108, and 127–132 (FSKMTF).

Belongs to the RNA methyltransferase RlmH family. In terms of assembly, homodimer.

The protein resides in the cytoplasm. It catalyses the reaction pseudouridine(1915) in 23S rRNA + S-adenosyl-L-methionine = N(3)-methylpseudouridine(1915) in 23S rRNA + S-adenosyl-L-homocysteine + H(+). Its function is as follows. Specifically methylates the pseudouridine at position 1915 (m3Psi1915) in 23S rRNA. The protein is Ribosomal RNA large subunit methyltransferase H of Exiguobacterium sp. (strain ATCC BAA-1283 / AT1b).